The chain runs to 665 residues: MLSNSTFHEHHAKSHFHNNACQSNASSSACRASEDHLVSSFPNDSIIDLQPSRPAPEPPKKKFGYYARRLSGHFLSLIHGSGNSTRSPPFHLQNQKSNGQSEVWHSSDDSGSPKRLNRSRSSKEDMYRRRSLHGLPSLSRRNSKKSSTLSRSISLHLRSESAPISLPIHLYKSYSYNHSPSSLPTVLNSQALSSPPVPTTPDEVSTNRLSSSTSSMNCRNLVPDNFNISIRPNTTNYRSSIQENSNGNRDSISPSAYDAPLLHNVDTQSIDGFVSVASHFSSASTAESLDDGHSATTIQQGDVSSYPLSRSVSTPVPMSPISISPAKPSPQSPKLSQSAVGHPSSSIPAAAMHKVSYSDDLMRFVAREKYYLQIVDCLCTQKDPLFFYTDFTKICQQDTVGTYVARQTLDKEVVVIKRFDISAVTHRRLLLEELQRLSGLSHKNLIRYNESFWYLNNIWSVFEYKDPSTKLSALIPKYFFSELNIASICYEISSGLAFLHNSGIAHHNLTTECIYLTKSSCLKIGNYAFSSPYIERQTNRGAVSHVPDWLIEKNYKEGFMKDVKSLGLVALEIFQGQPNFFRKSIQSIQLTPNANVLVNRVRGLISQEFKEFLLQTLQAETLQGPNINMLLETSSFLEKRQTLNFEICLNNLNLRERKASRYSYL.

Disordered stretches follow at residues 42–63 (PNDS…KKKF), 82–152 (GNST…LSRS), 187–217 (LNSQ…SSMN), and 286–343 (AESL…VGHP). Residues 82-104 (GNSTRSPPFHLQNQKSNGQSEVW) show a composition bias toward polar residues. Low complexity-rich tracts occupy residues 137 to 152 (SLSR…LSRS) and 206 to 217 (TNRLSSSTSSMN). Residues 294 to 316 (SATTIQQGDVSSYPLSRSVSTPV) are compositionally biased toward polar residues. A Phosphoserine modification is found at Ser358. Residues 388 to 637 (YTDFTKICQQ…NMLLETSSFL (250 aa)) form the Protein kinase domain. Residues 394-402 (ICQQDTVGT) and Lys417 contribute to the ATP site.

Its subcellular location is the cytoplasm. This chain is Protein kinase domain-containing protein ppk2 (ppk2), found in Schizosaccharomyces pombe (strain 972 / ATCC 24843) (Fission yeast).